A 336-amino-acid chain; its full sequence is Ketol-acid reductoisomerase (NADP(+)) 1 (336 aa).

The KARI N-terminal Rossmann domain maps to 2–181; sequence AKVYYEKDVT…GATRAGVLET (180 aa). Residues 25 to 28, R48, S52, and 82 to 85 contribute to the NADP(+) site; these read YGSQ and DELQ. Residue H107 is part of the active site. Residue G133 participates in NADP(+) binding. Residues 182 to 327 enclose the KARI C-terminal knotted domain; sequence TFKEETETDL…RKLREMMPFV (146 aa). Mg(2+) is bound by residues D190, E194, E226, and E230. S251 contributes to the substrate binding site.

This sequence belongs to the ketol-acid reductoisomerase family. Mg(2+) serves as cofactor.

It catalyses the reaction (2R)-2,3-dihydroxy-3-methylbutanoate + NADP(+) = (2S)-2-acetolactate + NADPH + H(+). The catalysed reaction is (2R,3R)-2,3-dihydroxy-3-methylpentanoate + NADP(+) = (S)-2-ethyl-2-hydroxy-3-oxobutanoate + NADPH + H(+). The protein operates within amino-acid biosynthesis; L-isoleucine biosynthesis; L-isoleucine from 2-oxobutanoate: step 2/4. It participates in amino-acid biosynthesis; L-valine biosynthesis; L-valine from pyruvate: step 2/4. Its function is as follows. Involved in the biosynthesis of branched-chain amino acids (BCAA). Catalyzes an alkyl-migration followed by a ketol-acid reduction of (S)-2-acetolactate (S2AL) to yield (R)-2,3-dihydroxy-isovalerate. In the isomerase reaction, S2AL is rearranged via a Mg-dependent methyl migration to produce 3-hydroxy-3-methyl-2-ketobutyrate (HMKB). In the reductase reaction, this 2-ketoacid undergoes a metal-dependent reduction by NADPH to yield (R)-2,3-dihydroxy-isovalerate. In Bacillus cereus (strain ZK / E33L), this protein is Ketol-acid reductoisomerase (NADP(+)) 1.